The primary structure comprises 29 residues: Cyclotide mela-2 (29 aa).

Residues 1 to 29 constitute a cross-link (cyclopeptide (Gly-Asp)); that stretch reads GKPTCGETCFKGKCYTPGCTCSYPLCKKD. Intrachain disulfides connect cysteine 5–cysteine 19, cysteine 9–cysteine 21, and cysteine 14–cysteine 26.

This is a cyclic peptide. In terms of processing, contains 3 disulfide bonds.

In terms of biological role, probably participates in a plant defense mechanism (Potential). Binds to and induces leakage in phospholipd membranes, particularly ones containing 1-palmitoyl-2-oleophosphatidylethanolamine (POPE). In vitro, displays cytotoxicity against cultured cells but no hemolytic activity towards fresh erythrocytes. Not active against Gram-negative bacterium E.coli ATCC 25922 or Gram-positive bacterium S.aureus ATCC 25923 up to a concentration of 64 uM. In Melicytus latifolius (Norfolk Island mahoe), this protein is Cyclotide mela-2.